We begin with the raw amino-acid sequence, 527 residues long: Nucleobase-ascorbate transporter LPE1 (527 aa).

The next 12 membrane-spanning stretches (helical) occupy residues 43-63 (LVML…MGGG), 68-88 (AIVI…QVHF), 92-112 (LPAV…IILS), 132-152 (LQGA…FGIW), 163-183 (AAVP…FPGV), 189-209 (VGLP…HLFA), 219-239 (AVLV…AAGA), 284-304 (FAML…LIAV), 361-383 (VIKI…AVLA), 387-409 (LPIF…FSLL), 427-447 (LFLG…FGFG), and 458-478 (VMVN…AYLL).

Belongs to the nucleobase:cation symporter-2 (NCS2) (TC 2.A.40) family. As to expression, highly expressed in roots.

Its subcellular location is the membrane. With respect to regulation, inhibited by excess of xanthin, uric acid and ascorbic acid, and by 100 um N,N-dicyclohexylcarbodiimide and 30 um carbonyl cyanide m-chlorophenyl-hydrazone. Functionally, high affinity uric acid-xanthine transporter in A.nidulans. Binds, but cannot transport ascorbic acid. The polypeptide is Nucleobase-ascorbate transporter LPE1 (LPE1) (Zea mays (Maize)).